Reading from the N-terminus, the 125-residue chain is Large ribosomal subunit protein bL21 (125 aa).

Belongs to the bacterial ribosomal protein bL21 family. As to quaternary structure, part of the 50S ribosomal subunit. Contacts protein L20.

In terms of biological role, this protein binds to 23S rRNA in the presence of protein L20. The chain is Large ribosomal subunit protein bL21 from Synechococcus sp. (strain CC9902).